We begin with the raw amino-acid sequence, 544 residues long: NEDD4-binding protein 3 (544 aa).

Disordered regions lie at residues 61-84 (LPKKDSKSTKNTKRAPRNEPADYA), 116-252 (SVFK…EFSC), 335-365 (KELRAQQGLAPEPRAPGTLPEADPSARPEEE), and 430-465 (QEQAPREEAPGSCETDDCKSRGLLGEAGGSEARDSA). Ser176 is modified (phosphoserine). A compositionally biased stretch (low complexity) spans 186–222 (PSLSDSSSGGSFGRSPGTGPSPFSSSLGHLNHLGGSL). The stretch at 294 to 530 (LAELKRLYVE…LEQELRALRE (237 aa)) forms a coiled coil.

This sequence belongs to the N4BP3 family. Binds NEDD4. Interacts with 14-3-3 proteins. Interacts with MAVS.

The protein localises to the cytoplasmic vesicle. It localises to the cell projection. The protein resides in the axon. Its subcellular location is the dendrite. Functionally, plays a positive role in the antiviral innate immune signaling pathway. Mechanistically, interacts with MAVS and functions as a positive regulator to promote 'Lys-63'-linked polyubiquitination of MAVS and thus strengthens the interaction between MAVS and TRAF2. Also plays a role in axon and dendrite arborization during cranial nerve development. May also be important for neural crest migration and early development of other anterior structures including eye, brain and cranial cartilage. The sequence is that of NEDD4-binding protein 3 (N4BP3) from Homo sapiens (Human).